Here is a 379-residue protein sequence, read N- to C-terminus: MPAAFPPDSVGLVTPQTAHFSEPLALACGRSLADYDLIYETYGTLNAQASNAVLICHALSGHHHAAGYHSVDDRKPGWWDSCIGPGKPIDTNKFFVVSLNNLGGCNGSTGPSSLNPETGKPFGADFPVLTVEDWVHSQARLADLLGIGQWAAVIGGSLGGMQALQWTITYPDRVRHCLAIASAPKLSAQNIAFNEVARQAILTDPEFHGGSFQEHGVIPKRGLMLARMVGHITYLSDDSMGEKFGRGLKSEKLNYDFHSVEFQVESYLRYQGEEFSGRFDANTYLLMTKALDYFDPAANFNDNLAKTFEGAKAKFCVMSFTTDWRFSPARSRELVDALMAARKDVSYLEIDAPQGHDAFLIPIPRYLQAFGNYMNRITL.

Residues Asn-51–Leu-360 enclose the AB hydrolase-1 domain. Ser-157 (nucleophile) is an active-site residue. Arg-227 is a substrate binding site. Active-site residues include Asp-323 and His-356. Asp-357 contributes to the substrate binding site.

This sequence belongs to the AB hydrolase superfamily. MetX family. As to quaternary structure, homodimer.

The protein resides in the cytoplasm. The enzyme catalyses L-homoserine + succinyl-CoA = O-succinyl-L-homoserine + CoA. It functions in the pathway amino-acid biosynthesis; L-methionine biosynthesis via de novo pathway; O-succinyl-L-homoserine from L-homoserine: step 1/1. Functionally, transfers a succinyl group from succinyl-CoA to L-homoserine, forming succinyl-L-homoserine. This Pseudomonas fluorescens (strain Pf0-1) protein is Homoserine O-succinyltransferase.